The chain runs to 488 residues: Centrosomal protein cep57l1 (488 aa).

Residues 71–226 (LESEKTHARD…AQVQTSLEVN (156 aa)) are a coiled coil. Disordered stretches follow at residues 232 to 272 (SASS…PPSK) and 311 to 342 (PRVS…LMSS). The span at 241–250 (RKVKKKKQSK) shows a compositional bias: basic residues. Basic and acidic residues-rich tracts occupy residues 259–270 (PSSKEPLSKEPP) and 314–325 (SQKDPKTVEHKP). A coiled-coil region spans residues 377-403 (KNTDMREDLERELDYLVKQMEIKSDQI). Residues 416–464 (LKKTAKKQPRPPSTTKPAEDEQNIGATDPCTPRNKGNLANGTGTPNSKA) form a disordered region. Residues 452–464 (NLANGTGTPNSKA) show a composition bias toward polar residues.

It belongs to the translokin family. As to quaternary structure, interacts with clip1, mis12, ndc80 and zwint. Interacts with gamma-tubulin.

It is found in the cytoplasm. The protein localises to the cytoskeleton. The protein resides in the microtubule organizing center. It localises to the centrosome. Its subcellular location is the chromosome. It is found in the centromere. The protein localises to the kinetochore. The protein resides in the spindle. In terms of biological role, required for spindle microtubule attachment to both kinetochores and centrosomes. Also functions to tether minus-ends of spindle microtubules to centrosomes. May act by forming ring-like structures around microtubules, or by serving as a cross-linker or scaffold at the attachment site. This Xenopus laevis (African clawed frog) protein is Centrosomal protein cep57l1 (cep57l1).